The primary structure comprises 324 residues: Probable carboxylesterase 9 (324 aa).

The Involved in the stabilization of the negatively charged intermediate by the formation of the oxyanion hole signature appears at 86–88 (HGS). Active-site residues include S171, D272, and H302.

This sequence belongs to the 'GDXG' lipolytic enzyme family. In terms of tissue distribution, expressed in flowers.

The catalysed reaction is a carboxylic ester + H2O = an alcohol + a carboxylate + H(+). In terms of biological role, carboxylesterase acting on esters with varying acyl chain length. This is Probable carboxylesterase 9 (CXE9) from Arabidopsis thaliana (Mouse-ear cress).